The chain runs to 1067 residues: Probable isoleucine--tRNA ligase, cytoplasmic (1067 aa).

A 'HIGH' region motif is present at residues 47–57; the sequence is PFATGLPHYGH. Residues 604 to 608 carry the 'KMSKS' region motif; sequence KMSKR. K607 provides a ligand contact to ATP.

It belongs to the class-I aminoacyl-tRNA synthetase family.

Its subcellular location is the cytoplasm. The enzyme catalyses tRNA(Ile) + L-isoleucine + ATP = L-isoleucyl-tRNA(Ile) + AMP + diphosphate. The chain is Probable isoleucine--tRNA ligase, cytoplasmic (ileS) from Dictyostelium discoideum (Social amoeba).